The chain runs to 258 residues: MAPITDEVVNGLKDTIGKLEARVEELEGRLSNQVKPKSVAEQMRIILMGPPGAGKGTQAPRLKEKYCVCHLATGDMLRSQVAKKTALGKEAKKIMDQGGLVSDEIMVNMIQSELDNNAECKNGFILDGFPRTVAQAERLDDMLNARQQKLQHAVELQIDDALLVARITGRLVHPASGRSYHKIFNPPKEEMKDDVTGEPLIQRSDDNADTLKKRLGTYHAQTAPVVEYYKKTGIWRGIDASQEPGQVWKSLLGVFRQN.

52–57 (GAGKGT) contributes to the ATP binding site. The tract at residues 72–101 (ATGDMLRSQVAKKTALGKEAKKIMDQGGLV) is NMP. AMP contacts are provided by residues threonine 73, arginine 78, 99 to 101 (GLV), 128 to 131 (GFPR), and glutamine 135. An LID region spans residues 169–206 (GRLVHPASGRSYHKIFNPPKEEMKDDVTGEPLIQRSDD). ATP-binding positions include arginine 170 and 179–180 (SY). The AMP site is built by arginine 203 and arginine 214. Position 242 (glutamine 242) interacts with ATP.

It belongs to the adenylate kinase family. AK2 subfamily. As to quaternary structure, monomer.

It localises to the cytoplasm. It is found in the cytosol. The protein localises to the mitochondrion intermembrane space. It carries out the reaction AMP + ATP = 2 ADP. In terms of biological role, catalyzes the reversible transfer of the terminal phosphate group between ATP and AMP. Plays an important role in cellular energy homeostasis and in adenine nucleotide metabolism. Adenylate kinase activity is critical for regulation of the phosphate utilization and the AMP de novo biosynthesis pathways. In Aspergillus niger (strain ATCC MYA-4892 / CBS 513.88 / FGSC A1513), this protein is Adenylate kinase (adk1).